Here is a 727-residue protein sequence, read N- to C-terminus: Transcription activator of gluconeogenesis TRV_01442 (727 aa).

The segment covering 1–32 has biased composition (polar residues); it reads MSPHQTTGQESDNMTVNGENAQASSQYIQSNE. Residues 1-62 form a disordered region; it reads MSPHQTTGQE…PSRPKRKKAK (62 aa). Basic and acidic residues predominate over residues 39-55; that stretch reads ATEKKASAAKAAKDPSR. A DNA-binding region (zn(2)-C6 fungal-type) is located at residues 65 to 93; that stretch reads CYACQRGHLTCGDERPCQRCIKRGFQDAC. Composition is skewed to polar residues over residues 129 to 213, 267 to 277, and 361 to 379; these read NNVN…TPSA, PSDSGAQRGSI, and MMTT…GAFN. 5 disordered regions span residues 129–224, 264–297, 353–399, 533–567, and 627–666; these read NNVN…FNST, DTPP…ESPS, SPAS…STPQ, NHNV…YNSS, and GSNG…QRRW. 2 stretches are compositionally biased toward low complexity: residues 380–399 and 543–553; these read SRQN…STPQ and GLMTGSTSRGS. A compositionally biased stretch (polar residues) spans 639 to 661; it reads EATSNETNELNGSHTNGATTNGR.

Belongs to the ERT1/acuK family.

It is found in the nucleus. Its function is as follows. Transcription factor which regulates nonfermentable carbon utilization. Activator of gluconeogenetic genes. This chain is Transcription activator of gluconeogenesis TRV_01442, found in Trichophyton verrucosum (strain HKI 0517).